Here is a 126-residue protein sequence, read N- to C-terminus: MTLDPYYETMYILRPDIPEEEVESHVTKYRDMIVEAGAEVLDNQMRGKRRLAYPIAKHKEGIYVQLSHNGDGQQVEVLEKAMRISEDVIRYLTVKQEGPLPAPRVVPGTEAPEPAQAAETPEPEAS.

The disordered stretch occupies residues 99-126 (PLPAPRVVPGTEAPEPAQAAETPEPEAS). Positions 107–120 (PGTEAPEPAQAAET) are enriched in low complexity.

This sequence belongs to the bacterial ribosomal protein bS6 family.

Functionally, binds together with bS18 to 16S ribosomal RNA. The chain is Small ribosomal subunit protein bS6 from Synechococcus sp. (strain CC9902).